The sequence spans 332 residues: Anthranilate phosphoribosyltransferase (332 aa).

Residues Gly79, 82-83 (GD), Ser87, 89-92 (NIST), 107-115 (KHGNRSVSS), and Ser119 each bind 5-phospho-alpha-D-ribose 1-diphosphate. Gly79 provides a ligand contact to anthranilate. Residue Ser91 participates in Mg(2+) binding. Residue Asn110 coordinates anthranilate. Arg165 is a binding site for anthranilate. Mg(2+) contacts are provided by Asp223 and Glu224.

The protein belongs to the anthranilate phosphoribosyltransferase family. Homodimer. Requires Mg(2+) as cofactor.

It carries out the reaction N-(5-phospho-beta-D-ribosyl)anthranilate + diphosphate = 5-phospho-alpha-D-ribose 1-diphosphate + anthranilate. It participates in amino-acid biosynthesis; L-tryptophan biosynthesis; L-tryptophan from chorismate: step 2/5. In terms of biological role, catalyzes the transfer of the phosphoribosyl group of 5-phosphorylribose-1-pyrophosphate (PRPP) to anthranilate to yield N-(5'-phosphoribosyl)-anthranilate (PRA). This is Anthranilate phosphoribosyltransferase from Yersinia pseudotuberculosis serotype O:3 (strain YPIII).